Consider the following 113-residue polypeptide: Putative membrane protein insertion efficiency factor (113 aa).

The protein belongs to the UPF0161 family.

It localises to the cell inner membrane. Could be involved in insertion of integral membrane proteins into the membrane. This is Putative membrane protein insertion efficiency factor from Campylobacter concisus (strain 13826).